The chain runs to 265 residues: Thiazole synthase (265 aa).

Residue lysine 103 is the Schiff-base intermediate with DXP of the active site. Residues glycine 164, 190 to 191, and 212 to 213 each bind 1-deoxy-D-xylulose 5-phosphate; these read AG and NT.

The protein belongs to the ThiG family. Homotetramer. Forms heterodimers with either ThiH or ThiS.

It is found in the cytoplasm. The enzyme catalyses [ThiS sulfur-carrier protein]-C-terminal-Gly-aminoethanethioate + 2-iminoacetate + 1-deoxy-D-xylulose 5-phosphate = [ThiS sulfur-carrier protein]-C-terminal Gly-Gly + 2-[(2R,5Z)-2-carboxy-4-methylthiazol-5(2H)-ylidene]ethyl phosphate + 2 H2O + H(+). Its pathway is cofactor biosynthesis; thiamine diphosphate biosynthesis. In terms of biological role, catalyzes the rearrangement of 1-deoxy-D-xylulose 5-phosphate (DXP) to produce the thiazole phosphate moiety of thiamine. Sulfur is provided by the thiocarboxylate moiety of the carrier protein ThiS. In vitro, sulfur can be provided by H(2)S. This Bordetella bronchiseptica (strain ATCC BAA-588 / NCTC 13252 / RB50) (Alcaligenes bronchisepticus) protein is Thiazole synthase.